Here is a 461-residue protein sequence, read N- to C-terminus: Proton extrusion protein PxcA (461 aa).

The next 4 membrane-spanning stretches (helical) occupy residues Phe244–Val264, Leu339–Gly359, Ile386–Val406, and Phe421–Ile441.

The protein belongs to the CemA family.

It is found in the cell inner membrane. Required for H(+) efflux immediately after light irradiation to form a rapid H(+) concentration gradient across the thylakoid membranes. Together with PxcL, contributes to transient H(+) uptake following dark to light transition. The chain is Proton extrusion protein PxcA from Thermosynechococcus vestitus (strain NIES-2133 / IAM M-273 / BP-1).